The chain runs to 88 residues: UPF0223 protein RBAM_014500 (88 aa).

It belongs to the UPF0223 family.

This chain is UPF0223 protein RBAM_014500, found in Bacillus velezensis (strain DSM 23117 / BGSC 10A6 / LMG 26770 / FZB42) (Bacillus amyloliquefaciens subsp. plantarum).